The chain runs to 245 residues: Putative outer membrane protein RBE_0022 (245 aa).

Residues 1–23 (MIRMSKRLGVILFVSCISINSFA) form the signal peptide.

It belongs to the OmpW/AlkL family.

It is found in the cell outer membrane. The chain is Putative outer membrane protein RBE_0022 from Rickettsia bellii (strain RML369-C).